The primary structure comprises 246 residues: 4-hydroxy-tetrahydrodipicolinate reductase (246 aa).

Residues 8–13, 75–77, and 99–102 contribute to the NAD(+) site; these read GISGRM, GTT, and ASNY. The active-site Proton donor/acceptor is His-132. A (S)-2,3,4,5-tetrahydrodipicolinate-binding site is contributed by His-133. Lys-136 (proton donor) is an active-site residue. 142–143 is a binding site for (S)-2,3,4,5-tetrahydrodipicolinate; it reads GT.

Belongs to the DapB family.

It localises to the cytoplasm. It carries out the reaction (S)-2,3,4,5-tetrahydrodipicolinate + NAD(+) + H2O = (2S,4S)-4-hydroxy-2,3,4,5-tetrahydrodipicolinate + NADH + H(+). The enzyme catalyses (S)-2,3,4,5-tetrahydrodipicolinate + NADP(+) + H2O = (2S,4S)-4-hydroxy-2,3,4,5-tetrahydrodipicolinate + NADPH + H(+). It participates in amino-acid biosynthesis; L-lysine biosynthesis via DAP pathway; (S)-tetrahydrodipicolinate from L-aspartate: step 4/4. In terms of biological role, catalyzes the conversion of 4-hydroxy-tetrahydrodipicolinate (HTPA) to tetrahydrodipicolinate. This Akkermansia muciniphila (strain ATCC BAA-835 / DSM 22959 / JCM 33894 / BCRC 81048 / CCUG 64013 / CIP 107961 / Muc) protein is 4-hydroxy-tetrahydrodipicolinate reductase.